A 153-amino-acid chain; its full sequence is Deoxyuridine 5'-triphosphate nucleotidohydrolase (153 aa).

Substrate is bound by residues 71-73, Asn84, 88-90, and Lys98; these read RSG and TID.

The protein belongs to the dUTPase family. It depends on Mg(2+) as a cofactor.

It carries out the reaction dUTP + H2O = dUMP + diphosphate + H(+). The protein operates within pyrimidine metabolism; dUMP biosynthesis; dUMP from dCTP (dUTP route): step 2/2. Functionally, this enzyme is involved in nucleotide metabolism: it produces dUMP, the immediate precursor of thymidine nucleotides and it decreases the intracellular concentration of dUTP so that uracil cannot be incorporated into DNA. This Wolbachia pipientis subsp. Culex pipiens (strain wPip) protein is Deoxyuridine 5'-triphosphate nucleotidohydrolase.